A 519-amino-acid polypeptide reads, in one-letter code: Putative ATP-dependent RNA helicase L396 (519 aa).

The 149-residue stretch at 110-258 (IKGMEEGGGG…IINWYMGPIL (149 aa)) folds into the Helicase ATP-binding domain. An ATP-binding site is contributed by 123–130 (MGCGSGKT). The short motif at 211-214 (DEVH) is the DEAH box element. Positions 317-457 (YLIQELFDMG…KQKYNIQKYY (141 aa)) constitute a Helicase C-terminal domain.

It belongs to the DEAD box helicase family. DEAH subfamily.

It catalyses the reaction ATP + H2O = ADP + phosphate + H(+). The protein is Putative ATP-dependent RNA helicase L396 of Acanthamoeba polyphaga (Amoeba).